The primary structure comprises 164 residues: Thiol peroxidase (164 aa).

A Thioredoxin domain is found at 17-162; it reads IKVGDTFPDF…YDEVLQAAQA (146 aa). The active-site Cysteine sulfenic acid (-SOH) intermediate is the Cys58. The cysteines at positions 58 and 92 are disulfide-linked.

This sequence belongs to the peroxiredoxin family. Tpx subfamily. Homodimer.

It catalyses the reaction a hydroperoxide + [thioredoxin]-dithiol = an alcohol + [thioredoxin]-disulfide + H2O. Functionally, thiol-specific peroxidase that catalyzes the reduction of hydrogen peroxide and organic hydroperoxides to water and alcohols, respectively. Plays a role in cell protection against oxidative stress by detoxifying peroxides. In Clostridium acetobutylicum (strain ATCC 824 / DSM 792 / JCM 1419 / IAM 19013 / LMG 5710 / NBRC 13948 / NRRL B-527 / VKM B-1787 / 2291 / W), this protein is Thiol peroxidase.